The primary structure comprises 273 residues: 4-hydroxy-tetrahydrodipicolinate reductase (273 aa).

NAD(+)-binding positions include 12 to 17 (GAGGRM) and Glu-38. Arg-39 is an NADP(+) binding site. Residues 102 to 104 (GTT) and 126 to 129 (AANF) each bind NAD(+). His-159 (proton donor/acceptor) is an active-site residue. Residue His-160 participates in (S)-2,3,4,5-tetrahydrodipicolinate binding. Lys-163 serves as the catalytic Proton donor. 169-170 (GT) lines the (S)-2,3,4,5-tetrahydrodipicolinate pocket.

This sequence belongs to the DapB family. In terms of assembly, homotetramer.

The protein resides in the cytoplasm. It carries out the reaction (S)-2,3,4,5-tetrahydrodipicolinate + NAD(+) + H2O = (2S,4S)-4-hydroxy-2,3,4,5-tetrahydrodipicolinate + NADH + H(+). It catalyses the reaction (S)-2,3,4,5-tetrahydrodipicolinate + NADP(+) + H2O = (2S,4S)-4-hydroxy-2,3,4,5-tetrahydrodipicolinate + NADPH + H(+). Its pathway is amino-acid biosynthesis; L-lysine biosynthesis via DAP pathway; (S)-tetrahydrodipicolinate from L-aspartate: step 4/4. Catalyzes the conversion of 4-hydroxy-tetrahydrodipicolinate (HTPA) to tetrahydrodipicolinate. The polypeptide is 4-hydroxy-tetrahydrodipicolinate reductase (Salmonella schwarzengrund (strain CVM19633)).